The sequence spans 450 residues: 6-phospho-beta-glucosidase (450 aa).

Position 5–73 (5–73 (LKVVTIGGGS…VPMKLYKTLD (69 aa))) interacts with NAD(+). Residues Arg-96 and Asn-150 each coordinate substrate. Residues Cys-172 and His-203 each contribute to the Mn(2+) site. The active-site Proton acceptor is the Tyr-258.

In terms of assembly, homotetramer. Requires NAD(+) as cofactor. Mn(2+) is required as a cofactor. It depends on Co(2+) as a cofactor. Ni(2+) serves as cofactor.

The enzyme catalyses 6-phospho-beta-D-glucosyl-(1-&gt;4)-D-glucose + H2O = D-glucose 6-phosphate + D-glucose. Its function is as follows. Hydrolyzes a wide variety of P-beta-glucosides including cellobiose-6P, salicin-6P, arbutin-6P, gentiobiose-6P, methyl-beta-glucoside-6P and p-nitrophenyl-beta-D-glucopyranoside-6P. Is also able to hydrolyze phospho-N,N'-diacetylchitobiose. This Escherichia coli (strain K12) protein is 6-phospho-beta-glucosidase (chbF).